A 126-amino-acid chain; its full sequence is Aspartate 1-decarboxylase (126 aa).

Residue S25 is the Schiff-base intermediate with substrate; via pyruvic acid of the active site. S25 is subject to Pyruvic acid (Ser). Residue T57 coordinates substrate. Y58 functions as the Proton donor in the catalytic mechanism. G73–A75 contacts substrate.

The protein belongs to the PanD family. Heterooctamer of four alpha and four beta subunits. It depends on pyruvate as a cofactor. Post-translationally, is synthesized initially as an inactive proenzyme, which is activated by self-cleavage at a specific serine bond to produce a beta-subunit with a hydroxyl group at its C-terminus and an alpha-subunit with a pyruvoyl group at its N-terminus.

It localises to the cytoplasm. The enzyme catalyses L-aspartate + H(+) = beta-alanine + CO2. It functions in the pathway cofactor biosynthesis; (R)-pantothenate biosynthesis; beta-alanine from L-aspartate: step 1/1. Functionally, catalyzes the pyruvoyl-dependent decarboxylation of aspartate to produce beta-alanine. The polypeptide is Aspartate 1-decarboxylase (Marinomonas sp. (strain MWYL1)).